The chain runs to 595 residues: 2-succinyl-5-enolpyruvyl-6-hydroxy-3-cyclohexene-1-carboxylate synthase (595 aa).

Belongs to the TPP enzyme family. MenD subfamily. As to quaternary structure, homodimer. The cofactor is Mg(2+). It depends on Mn(2+) as a cofactor. Requires thiamine diphosphate as cofactor.

It carries out the reaction isochorismate + 2-oxoglutarate + H(+) = 5-enolpyruvoyl-6-hydroxy-2-succinyl-cyclohex-3-ene-1-carboxylate + CO2. Its pathway is quinol/quinone metabolism; 1,4-dihydroxy-2-naphthoate biosynthesis; 1,4-dihydroxy-2-naphthoate from chorismate: step 2/7. It participates in cofactor biosynthesis; phylloquinone biosynthesis. Its function is as follows. Catalyzes the thiamine diphosphate-dependent decarboxylation of 2-oxoglutarate and the subsequent addition of the resulting succinic semialdehyde-thiamine pyrophosphate anion to isochorismate to yield 2-succinyl-5-enolpyruvyl-6-hydroxy-3-cyclohexene-1-carboxylate (SEPHCHC). This is 2-succinyl-5-enolpyruvyl-6-hydroxy-3-cyclohexene-1-carboxylate synthase from Synechocystis sp. (strain ATCC 27184 / PCC 6803 / Kazusa).